The following is a 437-amino-acid chain: Adenylosuccinate synthetase (437 aa).

Residues Gly12 to Lys18 and Gly40 to Thr42 each bind GTP. Asp13 serves as the catalytic Proton acceptor. Residues Asp13 and Gly40 each contribute to the Mg(2+) site. Residues Asp13 to Lys16, Asn38 to His41, Thr128, Arg142, Gln223, Thr238, and Arg302 each bind IMP. The Proton donor role is filled by His41. A substrate-binding site is contributed by Thr298–Arg304. GTP is bound by residues Arg304, Lys330–Asp332, and Ser412–Gly414.

Belongs to the adenylosuccinate synthetase family. Homodimer. Requires Mg(2+) as cofactor.

The protein resides in the cytoplasm. It catalyses the reaction IMP + L-aspartate + GTP = N(6)-(1,2-dicarboxyethyl)-AMP + GDP + phosphate + 2 H(+). Its pathway is purine metabolism; AMP biosynthesis via de novo pathway; AMP from IMP: step 1/2. Its function is as follows. Plays an important role in the de novo pathway of purine nucleotide biosynthesis. Catalyzes the first committed step in the biosynthesis of AMP from IMP. This is Adenylosuccinate synthetase from Prochlorococcus marinus (strain NATL1A).